The chain runs to 317 residues: Beta-ketoacyl-[acyl-carrier-protein] synthase III (317 aa).

Catalysis depends on residues Cys112 and His244. Residues 245–249 form an ACP-binding region; sequence QANLR. Residue Asn274 is part of the active site.

It belongs to the thiolase-like superfamily. FabH family. As to quaternary structure, homodimer.

It localises to the cytoplasm. The enzyme catalyses malonyl-[ACP] + acetyl-CoA + H(+) = 3-oxobutanoyl-[ACP] + CO2 + CoA. The protein operates within lipid metabolism; fatty acid biosynthesis. In terms of biological role, catalyzes the condensation reaction of fatty acid synthesis by the addition to an acyl acceptor of two carbons from malonyl-ACP. Catalyzes the first condensation reaction which initiates fatty acid synthesis and may therefore play a role in governing the total rate of fatty acid production. Possesses both acetoacetyl-ACP synthase and acetyl transacylase activities. Its substrate specificity determines the biosynthesis of branched-chain and/or straight-chain of fatty acids. In Shigella boydii serotype 4 (strain Sb227), this protein is Beta-ketoacyl-[acyl-carrier-protein] synthase III.